The following is a 798-amino-acid chain: Transferrin receptor protein 2 (798 aa).

At 1-81 the chain is on the cytoplasmic side; that stretch reads MEQRWGLLRK…WAAAGRKAAP (81 aa). Residues 23–26 carry the Endocytosis signal motif; that stretch reads YRRV. The disordered stretch occupies residues 25–44; sequence RVEGPQLENLEEEDREEGEE. Positions 33-44 are enriched in acidic residues; sequence NLEEEDREEGEE. Residues 82–102 traverse the membrane as a helical; Signal-anchor for type II membrane protein segment; sequence YLVLTTLLIFTGAFLLGYVAF. Over 103–798 the chain is Extracellular; the sequence is RGSCQACGDS…GDVWNIDNNF (696 aa). N-linked (GlcNAc...) asparagine glycans are attached at residues asparagine 235, asparagine 334, and asparagine 535.

This sequence belongs to the peptidase M28 family. M28B subfamily. Homodimer.

The protein localises to the cell membrane. Functionally, mediates cellular uptake of transferrin-bound iron in a non-iron dependent manner. May be involved in iron metabolism, hepatocyte function and erythrocyte differentiation. This Rattus norvegicus (Rat) protein is Transferrin receptor protein 2 (Tfr2).